The sequence spans 377 residues: Prolargin (377 aa).

The N-terminal stretch at 1–21 is a signal peptide; that stretch reads MRASFFWFLPLLLILASVAQG. The tract at residues 22–61 is disordered; the sequence is QPRPKPGIRRKPKPRPTPSFPQPHEPAEPTDLPPPLPPGP. Pro residues-rich tracts occupy residues 36-45 and 52-61; these read RPTPSFPQPH and DLPPPLPPGP. LRR repeat units follow at residues 90–109, 110–133, 134–157, 158–178, 179–202, 203–228, 229–249, 250–273, 274–298, 299–318, 319–357, and 358–377; these read RKVP…NNFI, TELP…NNRI, RKVD…KNQL, EEVP…QNLI, SRIP…HNRL, SDGV…HNIL, RRMP…SNKI, ETIP…YNKL, SDRG…HNKI, SNVP…NNSI, EKIN…GNFL, and KPPI…SVVI. N119 is a glycosylation site (N-linked (GlcNAc...) asparagine). 3 N-linked (GlcNAc...) asparagine glycosylation sites follow: N284, N315, and N322. A disulfide bridge connects residues C327 and C368.

The protein belongs to the small leucine-rich proteoglycan (SLRP) family. SLRP class II subfamily. In terms of assembly, binds the basement membrane heparan sulfate proteoglycan perlecan and triple helical collagens type I and type II. In terms of processing, glycosylated; contains heparan sulfate.

The protein localises to the secreted. The protein resides in the extracellular space. It localises to the extracellular matrix. May anchor basement membranes to the underlying connective tissue. This chain is Prolargin (Prelp), found in Rattus norvegicus (Rat).